The following is a 109-amino-acid chain: UPF0122 protein Cbei_1174 (109 aa).

This sequence belongs to the UPF0122 family.

Might take part in the signal recognition particle (SRP) pathway. This is inferred from the conservation of its genetic proximity to ftsY/ffh. May be a regulatory protein. The chain is UPF0122 protein Cbei_1174 from Clostridium beijerinckii (strain ATCC 51743 / NCIMB 8052) (Clostridium acetobutylicum).